The sequence spans 139 residues: MKKGAVLNSDISSVISRLGHTDTLVVCDAGLPVPSSTTRIDMALTQGVPSFMQVLDVVTREMQVEAAILATEIKEHNPQLHETLLSHIEQLQQHQGNTIEIRYTTHEHFKKLTADSQAVIRSGECSPYANVILCAGVTF.

Residue His20 is the Proton donor of the active site. Substrate contacts are provided by residues Asp28, His106, and 128–130; that span reads YAN.

This sequence belongs to the RbsD / FucU family. RbsD subfamily. Homodecamer.

It localises to the cytoplasm. It catalyses the reaction beta-D-ribopyranose = beta-D-ribofuranose. It functions in the pathway carbohydrate metabolism; D-ribose degradation; D-ribose 5-phosphate from beta-D-ribopyranose: step 1/2. Its function is as follows. Catalyzes the interconversion of beta-pyran and beta-furan forms of D-ribose. The polypeptide is D-ribose pyranase (Citrobacter koseri (strain ATCC BAA-895 / CDC 4225-83 / SGSC4696)).